Here is a 509-residue protein sequence, read N- to C-terminus: MSAAAAIASPIPAAIAVVQQQRRGRSRGGGSGAAAVRCSAVAPTSAIAPILADLRLRCAAPLPVLRRVADAMASGMRAGLADDGAGELKMIPSHVYSLPTGNETGLFYALDLGGTNFRVLRVQLGGKDKRIIDTEFEQVSIPREIMHGITEDLFDFIASGLSRFVATEGDKFHLPQGRKRELGFTFSFPVNQTSIDSGILIKWTKGFAVSGTAGKDVVACLNAAMERQGLDMRVSALVNDTVGTLAGARYWDDDVMVAVILGTGTNACYIQRTEAIPKLQHLKLETGNTIINTEWGAFSDGLPLTEFDREMDDESINPGEQIFEKTISGMYLGEIVRRVLVKMAEVSDLFGHSFPKKLAEPFVLRTPHLCAMQQDTSDNLGEVESILSDVIGVSQASLLARRVTVEVSDCIIRRGGRLAGAGIVGILEKMENDSRGHIFGRRTVVAMDGGLYEKYPQYRRYMKEAVAELLGPERSNRIAIEHTKDGSGIGAALLAAANSKYAAAQISTR.

The N-terminal 37 residues, 1 to 37 (MSAAAAIASPIPAAIAVVQQQRRGRSRGGGSGAAAVR), are a transit peptide targeting the chloroplast. One can recognise a Hexokinase domain in the interval 45 to 496 (SAIAPILADL…SGIGAALLAA (452 aa)). Residues 100–238 (TGNETGLFYA…GLDMRVSALV (139 aa)) are hexokinase small subdomain. ADP is bound by residues G114, T115, and N116. D-glucose contacts are provided by T204, K205, N239, and D240. The hexokinase large subdomain stretch occupies residues 239 to 485 (NDTVGTLAGA…NRIAIEHTKD (247 aa)). T263 lines the ADP pocket. Residues N266, E294, and E324 each contribute to the D-glucose site. ADP is bound at residue G450.

It belongs to the hexokinase family. As to expression, expressed in roots, leaves, flowers, immature seeds, endosperm and seed coat.

The protein resides in the plastid. It is found in the chloroplast stroma. It catalyses the reaction a D-hexose + ATP = a D-hexose 6-phosphate + ADP + H(+). It carries out the reaction D-fructose + ATP = D-fructose 6-phosphate + ADP + H(+). The catalysed reaction is D-glucose + ATP = D-glucose 6-phosphate + ADP + H(+). It participates in carbohydrate metabolism; hexose metabolism. Its pathway is carbohydrate degradation; glycolysis; D-glyceraldehyde 3-phosphate and glycerone phosphate from D-glucose: step 1/4. In terms of biological role, fructose and glucose phosphorylating enzyme. This is Hexokinase-4, chloroplastic (HXK4) from Oryza sativa subsp. japonica (Rice).